The following is a 92-amino-acid chain: Long neurotoxin 73 (92 aa).

Residues 1-21 (MKTLLLTLVVVTIVCLDLGDS) form the signal peptide. Intrachain disulfides connect cysteine 24/cysteine 41, cysteine 34/cysteine 62, cysteine 47/cysteine 51, cysteine 66/cysteine 77, and cysteine 78/cysteine 83.

This sequence belongs to the three-finger toxin family. Long-chain subfamily. Type II alpha-neurotoxin sub-subfamily. In terms of tissue distribution, expressed by the venom gland.

The protein localises to the secreted. Its function is as follows. Binds with high affinity to muscular (alpha-1/CHRNA1) and neuronal (alpha-7/CHRNA7) nicotinic acetylcholine receptor (nAChR) and inhibits acetylcholine from binding to the receptor, thereby impairing neuromuscular and neuronal transmission. This chain is Long neurotoxin 73, found in Drysdalia coronoides (White-lipped snake).